The sequence spans 222 residues: Superoxide dismutase [Mn], mitochondrial (222 aa).

A mitochondrion-targeting transit peptide spans 1-24 (MLSRGVCGTSRQLAPALGYLGSRQ). His-50 serves as a coordination point for Mn(2+). At Tyr-58 the chain carries 3'-nitrotyrosine. An N6-acetyllysine; alternate mark is found at Lys-68 and Lys-75. Lys-68 and Lys-75 each carry N6-succinyllysine; alternate. His-98 lines the Mn(2+) pocket. Lys-114 carries the post-translational modification N6-acetyllysine. Residues Lys-122 and Lys-130 each carry the N6-acetyllysine; alternate modification. 2 positions are modified to N6-succinyllysine; alternate: Lys-122 and Lys-130. Asp-183 and His-187 together coordinate Mn(2+). Residue Lys-202 is modified to N6-acetyllysine.

Belongs to the iron/manganese superoxide dismutase family. As to quaternary structure, homotetramer. Requires Mn(2+) as cofactor. Post-translationally, nitrated under oxidative stress. Nitration coupled with oxidation inhibits the catalytic activity. Acetylation at Lys-122 decreases enzymatic activity. Deacetylated by SIRT3 upon exposure to ionizing radiations or after long fasting. In terms of processing, polyubiquitinated; leading to proteasomal degradation. Deubiquitinated by USP36 which increases protein stability.

Its subcellular location is the mitochondrion matrix. The enzyme catalyses 2 superoxide + 2 H(+) = H2O2 + O2. Destroys superoxide anion radicals which are normally produced within the cells and which are toxic to biological systems. The polypeptide is Superoxide dismutase [Mn], mitochondrial (SOD2) (Pongo pygmaeus (Bornean orangutan)).